We begin with the raw amino-acid sequence, 274 residues long: 4-hydroxy-3-methylbut-2-enyl diphosphate reductase (274 aa).

Residue Cys12 participates in [4Fe-4S] cluster binding. (2E)-4-hydroxy-3-methylbut-2-enyl diphosphate contacts are provided by His36 and His70. Dimethylallyl diphosphate-binding residues include His36 and His70. Isopentenyl diphosphate-binding residues include His36 and His70. Cys92 contributes to the [4Fe-4S] cluster binding site. Residue His120 coordinates (2E)-4-hydroxy-3-methylbut-2-enyl diphosphate. His120 contacts dimethylallyl diphosphate. His120 lines the isopentenyl diphosphate pocket. Glu122 serves as the catalytic Proton donor. Residue Thr158 coordinates (2E)-4-hydroxy-3-methylbut-2-enyl diphosphate. Position 186 (Cys186) interacts with [4Fe-4S] cluster. 4 residues coordinate (2E)-4-hydroxy-3-methylbut-2-enyl diphosphate: Ser214, Ser215, Asn216, and Ser258. 4 residues coordinate dimethylallyl diphosphate: Ser214, Ser215, Asn216, and Ser258. Isopentenyl diphosphate contacts are provided by Ser214, Ser215, Asn216, and Ser258.

The protein belongs to the IspH family. It depends on [4Fe-4S] cluster as a cofactor.

It carries out the reaction isopentenyl diphosphate + 2 oxidized [2Fe-2S]-[ferredoxin] + H2O = (2E)-4-hydroxy-3-methylbut-2-enyl diphosphate + 2 reduced [2Fe-2S]-[ferredoxin] + 2 H(+). The enzyme catalyses dimethylallyl diphosphate + 2 oxidized [2Fe-2S]-[ferredoxin] + H2O = (2E)-4-hydroxy-3-methylbut-2-enyl diphosphate + 2 reduced [2Fe-2S]-[ferredoxin] + 2 H(+). The protein operates within isoprenoid biosynthesis; dimethylallyl diphosphate biosynthesis; dimethylallyl diphosphate from (2E)-4-hydroxy-3-methylbutenyl diphosphate: step 1/1. It functions in the pathway isoprenoid biosynthesis; isopentenyl diphosphate biosynthesis via DXP pathway; isopentenyl diphosphate from 1-deoxy-D-xylulose 5-phosphate: step 6/6. Functionally, catalyzes the conversion of 1-hydroxy-2-methyl-2-(E)-butenyl 4-diphosphate (HMBPP) into a mixture of isopentenyl diphosphate (IPP) and dimethylallyl diphosphate (DMAPP). Acts in the terminal step of the DOXP/MEP pathway for isoprenoid precursor biosynthesis. This is 4-hydroxy-3-methylbut-2-enyl diphosphate reductase from Campylobacter concisus (strain 13826).